The primary structure comprises 1378 residues: DNA-directed RNA polymerase subunit beta (1378 aa).

The protein belongs to the RNA polymerase beta chain family. The RNAP catalytic core consists of 2 alpha, 1 beta, 1 beta' and 1 omega subunit. When a sigma factor is associated with the core the holoenzyme is formed, which can initiate transcription.

It carries out the reaction RNA(n) + a ribonucleoside 5'-triphosphate = RNA(n+1) + diphosphate. DNA-dependent RNA polymerase catalyzes the transcription of DNA into RNA using the four ribonucleoside triphosphates as substrates. This is DNA-directed RNA polymerase subunit beta from Roseobacter denitrificans (strain ATCC 33942 / OCh 114) (Erythrobacter sp. (strain OCh 114)).